A 391-amino-acid polypeptide reads, in one-letter code: Mannose-6-phosphate isomerase (391 aa).

Positions 97, 99, 134, and 255 each coordinate Zn(2+). The active site involves Arg-274. An N6-acetyllysine modification is found at Lys-280.

The protein belongs to the mannose-6-phosphate isomerase type 1 family. It depends on Zn(2+) as a cofactor.

The protein localises to the cytoplasm. The enzyme catalyses D-mannose 6-phosphate = D-fructose 6-phosphate. Involved in the conversion of glucose to GDP-L-fucose, which can be converted to L-fucose, a capsular polysaccharide. This Shigella flexneri protein is Mannose-6-phosphate isomerase (manA).